Reading from the N-terminus, the 351-residue chain is Anthranilate phosphoribosyltransferase (351 aa).

Residues Gly-90, 93 to 94 (GD), Thr-98, 100 to 103 (NIST), 118 to 126 (KHGNRSASG), and Ser-130 each bind 5-phospho-alpha-D-ribose 1-diphosphate. An anthranilate-binding site is contributed by Gly-90. Residue Ser-102 participates in Mg(2+) binding. Asn-121 contacts anthranilate. Position 176 (Arg-176) interacts with anthranilate. Residues Asp-235 and Glu-236 each contribute to the Mg(2+) site.

This sequence belongs to the anthranilate phosphoribosyltransferase family. Homodimer. Mg(2+) is required as a cofactor.

The enzyme catalyses N-(5-phospho-beta-D-ribosyl)anthranilate + diphosphate = 5-phospho-alpha-D-ribose 1-diphosphate + anthranilate. The protein operates within amino-acid biosynthesis; L-tryptophan biosynthesis; L-tryptophan from chorismate: step 2/5. Its function is as follows. Catalyzes the transfer of the phosphoribosyl group of 5-phosphorylribose-1-pyrophosphate (PRPP) to anthranilate to yield N-(5'-phosphoribosyl)-anthranilate (PRA). The sequence is that of Anthranilate phosphoribosyltransferase from Prochlorococcus marinus (strain MIT 9313).